Reading from the N-terminus, the 64-residue chain is YSLQNDPEITLIDSTIEWDEGYDVTARFLDYLNSLDAGFVAELENKTVEQLWSEYKASYGPNGQ.

It depends on a divalent metal cation as a cofactor. Glycosylated.

With respect to regulation, inhibited by EDTA. In terms of biological role, metalloprotease, digests gelatin and azocasein (in vitro). This chain is Basic secretory protease, found in Boswellia serrata (Indian frankincense).